The following is a 526-amino-acid chain: Vang-like protein 1 (526 aa).

Residues 1-15 (MDTESTYSGYSYYSS) show a composition bias toward low complexity. The tract at residues 1–87 (MDTESTYSGY…TTAITGTSEH (87 aa)) is disordered. The Cytoplasmic portion of the chain corresponds to 1-114 (MDTESTYSGY…VGLDCKRYLG (114 aa)). Polar residues predominate over residues 75-87 (GETTTAITGTSEH). Phosphoserine occurs at positions 88 and 90. A helical membrane pass occupies residues 115–135 (LTVASFLGLLVFLTPIAFILL). Over 136 to 153 (PQILWREELKPCGAICEG) the chain is Extracellular. A helical transmembrane segment spans residues 154 to 174 (LLISVSFKLLILLIGTWALFF). Residues 175–184 (RKQRADVPRV) are Cytoplasmic-facing. A helical transmembrane segment spans residues 185–205 (FVFRALLLVLIFLFVVSYWLF). Residues 206–224 (YGVRILDSRDQNYKDIVQY) are Extracellular-facing. The chain crosses the membrane as a helical span at residues 225–245 (AVSLVDALLFIHYLAIVLLEL). Residues 246–526 (RQLQPMFTLQ…VLRLQSETSV (281 aa)) are Cytoplasmic-facing.

The protein belongs to the Vang family. Heterodimer with Vangl2. Interacts through its C-terminal region with the N-terminal half of DVL1, DVL2 and DVL3. The PDZ domain of DVL1, DVL2 and DVL3 is required for the interaction.

The protein resides in the cell membrane. The polypeptide is Vang-like protein 1 (Vangl1) (Mus musculus (Mouse)).